Consider the following 1476-residue polypeptide: Membrane-associated guanylate kinase, WW and PDZ domain-containing protein 3 (1476 aa).

The region spanning 18 to 108 (CAVSWAGPPG…PIRLKTVKPG (91 aa)) is the PDZ 1 domain. Positions 18-108 (CAVSWAGPPG…PIRLKTVKPG (91 aa)) are interaction with ADRB1 and TGFA. The 175-residue stretch at 116 to 290 (RHYLSLQFQK…SSMDFRNYMM (175 aa)) folds into the Guanylate kinase-like domain. 123–130 (FQKGSIDH) provides a ligand contact to ATP. The tract at residues 184–266 (TYDGNFYGTP…ETREMHSETS (83 aa)) is disordered. Over residues 193 to 204 (PKPPAEPSPFQP) the composition is skewed to pro residues. Residue serine 236 is modified to Phosphoserine. Acidic residues predominate over residues 238-247 (LPEEEEDEDK). 2 WW domains span residues 296-329 (EPLP…DPRL) and 342-375 (GELP…NPVE). Residues 413–495 (RASLKKSTMG…NQYVNLTLCR (83 aa)) form the PDZ 2 domain. The interaction with PTEN stretch occupies residues 413 to 495 (RASLKKSTMG…NQYVNLTLCR (83 aa)). Positions 551–575 (LASDRLNGPSESSEQRASLASSGSS) are disordered. A compositionally biased stretch (polar residues) spans 559-575 (PSESSEQRASLASSGSS). The 77-residue stretch at 581–657 (TIPLIKGPKG…GADVPLLILR (77 aa)) folds into the PDZ 3 domain. Serine 598 is modified (phosphoserine). The disordered stretch occupies residues 664–691 (TKTAKTKTDTKENSGSLETINEPIPQPM). A Phosphoserine modification is found at serine 702. The region spanning 729–811 (DVFLRKQESG…NGHVLLTVRR (83 aa)) is the PDZ 4 domain. Residues 729 to 811 (DVFLRKQESG…NGHVLLTVRR (83 aa)) form an interaction with ADGRB1 region. The interval 818–844 (KQPEDESHQAFSQNGSPRLNRAELPTR) is disordered. Phosphoserine occurs at positions 833 and 916. One can recognise a PDZ 5 domain in the interval 852–939 (DVTLQRKENE…TVTLTVVAEE (88 aa)). An interaction with LPAR2 and GRIN2B region spans residues 852–939 (DVTLQRKENE…TVTLTVVAEE (88 aa)). The tract at residues 939 to 966 (EEHHGPPSGTNSARQSPALQHRPMGQAQ) is disordered. Residues 946–956 (SGTNSARQSPA) show a composition bias toward polar residues. The 83-residue stretch at 1022-1104 (PVELERGPRG…KVLLLLRPGT (83 aa)) folds into the PDZ 6 domain. 2 disordered regions span residues 1109–1151 (DHGD…ATED) and 1168–1476 (TVQE…DKQL). Positions 1114–1123 (DTNSPSSSNV) are enriched in polar residues. Composition is skewed to basic and acidic residues over residues 1193–1211 (SKKD…RLKG) and 1230–1265 (RHSE…ESKG). Residues 1285–1304 (SSSPKKQQKIGGNSLSNTEG) are compositionally biased toward polar residues. Basic and acidic residues-rich tracts occupy residues 1317 to 1340 (HPRD…KDLK) and 1350 to 1361 (KSPEKKSSKVDE). Position 1321 is a phosphoserine (serine 1321). Residues 1363-1373 (SLPSKKTSSTA) show a composition bias toward polar residues. A compositionally biased stretch (basic and acidic residues) spans 1419–1437 (ADDHKGRESEVTDRCRERA).

This sequence belongs to the MAGUK family. Interacts with ADRB1, ADGRB1, LPAR2/EDG4, GRIN2B, PTEN, and PTPRB. Interacts with unidentified tyrosine phosphorylated proteins. Interacts with FZD4, FZD7, TGFA and VANGL2. Interacts with DLL1. Interacts with PRRG4 (via cytoplasmic domain). As to expression, widely expressed. Colocalizes with TGFA in neurons in the cortex and dentate gyrus, as well as in ependymal cells and some astrocytes (at protein level). Present in lens epithelium.

The protein localises to the cell membrane. It localises to the cell junction. It is found in the tight junction. The protein resides in the nucleus. Acts as a scaffolding protein at cell-cell junctions, thereby regulating various cellular and signaling processes. Cooperates with PTEN to modulate the kinase activity of AKT1. Its interaction with PTPRB and tyrosine phosphorylated proteins suggests that it may link receptor tyrosine phosphatase with its substrates at the plasma membrane. In polarized epithelial cells, involved in efficient trafficking of TGFA to the cell surface. Regulates the ability of LPAR2 to activate ERK and RhoA pathways. Regulates the JNK signaling cascade via its interaction with FZD4 and VANGL2. In Mus musculus (Mouse), this protein is Membrane-associated guanylate kinase, WW and PDZ domain-containing protein 3 (Magi3).